The sequence spans 238 residues: Ribonuclease 3 (238 aa).

One can recognise an RNase III domain in the interval 11–136 (RARLEAAIGY…LIAAIYLDGG (126 aa)). Glutamate 49 is a Mg(2+) binding site. Residue aspartate 53 is part of the active site. Mg(2+) is bound by residues aspartate 122 and glutamate 125. Glutamate 125 is an active-site residue. Residues 161–230 (DAKTELQEWA…AMKLLEREGV (70 aa)) form the DRBM domain. Positions 180-193 (YRTEDRSGPDHDPR) are enriched in basic and acidic residues. Residues 180 to 215 (YRTEDRSGPDHDPRFTVTVEVDGIDPETGVDRSKRG) form a disordered region.

It belongs to the ribonuclease III family. Homodimer. Mg(2+) is required as a cofactor.

It localises to the cytoplasm. The enzyme catalyses Endonucleolytic cleavage to 5'-phosphomonoester.. In terms of biological role, digests double-stranded RNA. Involved in the processing of primary rRNA transcript to yield the immediate precursors to the large and small rRNAs (23S and 16S). Processes some mRNAs, and tRNAs when they are encoded in the rRNA operon. Processes pre-crRNA and tracrRNA of type II CRISPR loci if present in the organism. The sequence is that of Ribonuclease 3 from Sinorhizobium medicae (strain WSM419) (Ensifer medicae).